Reading from the N-terminus, the 304-residue chain is Phytol kinase 1, chloroplastic (304 aa).

A chloroplast-targeting transit peptide spans 1 to 59 (MAATLPLSPINHQLCRFGNNSLTTHRFCSPGFLISSPCFIGLTGMGSATQLRARRSLIS). 6 consecutive transmembrane segments (helical) span residues 71–91 (VGAT…FESL), 105–125 (LVHI…SGST), 129–149 (YFAA…GLSI), 167–187 (ELLK…VFFW), 191–211 (PIGM…DIMG), and 227–247 (WAGS…LLYY).

This sequence belongs to the polyprenol kinase family.

The protein localises to the plastid. Its subcellular location is the chloroplast membrane. It catalyses the reaction phytol + CTP = phytyl phosphate + CDP + H(+). The protein operates within cofactor biosynthesis; tocopherol biosynthesis. Functionally, kinase involved in the activation and reutilization of phytol from chlorophyll degradation in plant metabolism, including tocopherol biosynthesis. Catalyzes the conversion of phytol to phytol monophosphate (PMP) in the presence of CTP or UTP. No activity with ATP or GTP as phosphoryl donor. This Arabidopsis thaliana (Mouse-ear cress) protein is Phytol kinase 1, chloroplastic.